The sequence spans 241 residues: Glutathione S-transferase omega-1 (241 aa).

Position 2 is an N-acetylserine (S2). A GST N-terminal domain is found at 22 to 101; the sequence is GSIRIYSMRF…YLDEAYPGKK (80 aa). The Nucleophile role is filled by C32. K57 is subject to N6-acetyllysine. Glutathione contacts are provided by residues K59, V72, and 85-86; that span reads ES. The GST C-terminal domain maps to 106–230; it reads DPYEKACQKM…DWQGFLELYL (125 aa). Residue S129 is modified to Phosphoserine. N6-acetyllysine occurs at positions 143, 148, and 152.

The protein belongs to the GST superfamily. Omega family. In terms of assembly, homodimer. As to expression, ubiquitous. Highest expression in liver, pancreas, skeletal muscle, spleen, thymus, colon, blood leukocyte and heart. Lowest expression in brain, placenta and lung.

It localises to the cytoplasm. The protein resides in the cytosol. The catalysed reaction is RX + glutathione = an S-substituted glutathione + a halide anion + H(+). The enzyme catalyses L-dehydroascorbate + 2 glutathione = glutathione disulfide + L-ascorbate. It carries out the reaction methylarsonate + 2 glutathione + H(+) = methylarsonous acid + glutathione disulfide + H2O. Its activity is regulated as follows. Monomethylarsonic acid reductase activity is competitively inhibited by 1-chloro 2,4-dinitrobenzene (CDNB) and by deoxycholate. Functionally, exhibits glutathione-dependent thiol transferase and dehydroascorbate reductase activities. Has S-(phenacyl)glutathione reductase activity. Also has glutathione S-transferase activity. Participates in the biotransformation of inorganic arsenic and reduces monomethylarsonic acid (MMA) and dimethylarsonic acid. This is Glutathione S-transferase omega-1 (GSTO1) from Homo sapiens (Human).